The sequence spans 339 residues: Leucine-rich repeat-containing protein 75A (339 aa).

The disordered stretch occupies residues Met1–Glu25. Low complexity predominate over residues Ala11–Gly21. LRR repeat units follow at residues Val203–Asp216 and Leu228–Leu241. Residues Leu294–Thr339 form a disordered region. Residue Ser322 is modified to Phosphoserine. A Phosphothreonine modification is found at Thr325. Residues Gln330 to Thr339 show a composition bias toward polar residues.

Belongs to the LRRC75 family.

This chain is Leucine-rich repeat-containing protein 75A (Lrrc75a), found in Mus musculus (Mouse).